The following is a 138-amino-acid chain: Putative pre-16S rRNA nuclease (138 aa).

Belongs to the YqgF nuclease family.

It localises to the cytoplasm. Could be a nuclease involved in processing of the 5'-end of pre-16S rRNA. The chain is Putative pre-16S rRNA nuclease from Shigella dysenteriae serotype 1 (strain Sd197).